The following is a 162-amino-acid chain: Interleukin-15 (162 aa).

The signal sequence occupies residues M1–A29. Residues G30 to A48 constitute a propeptide that is removed on maturation. 2 cysteine pairs are disulfide-bonded: C83–C133 and C90–C136. N-linked (GlcNAc...) asparagine glycosylation is present at N127.

The protein belongs to the IL-15/IL-21 family.

Its subcellular location is the secreted. Functionally, cytokine that plays a major role in the development of inflammatory and protective immune responses to microbial invaders and parasites by modulating immune cells of both the innate and adaptive immune systems. Stimulates the proliferation of natural killer cells, T-cells and B-cells and promotes the secretion of several cytokines. In monocytes, induces the production of IL8 and monocyte chemotactic protein 1/CCL2, two chemokines that attract neutrophils and monocytes respectively to sites of infection. Unlike most cytokines, which are secreted in soluble form, IL15 is expressed in association with its high affinity IL15RA on the surface of IL15-producing cells and delivers signals to target cells that express IL2RB and IL2RG receptor subunits. Binding to its receptor triggers the phosphorylation of JAK1 and JAK3 and the recruitment and subsequent phosphorylation of signal transducer and activator of transcription-3/STAT3 and STAT5. In mast cells, induces the rapid tyrosine phosphorylation of STAT6 and thereby controls mast cell survival and release of cytokines such as IL4. The polypeptide is Interleukin-15 (IL15) (Macaca thibetana (Pere David's macaque)).